Here is a 385-residue protein sequence, read N- to C-terminus: Probable caffeine synthase MTL1 (385 aa).

S-adenosyl-L-homocysteine contacts are provided by Y18, C62, N67, D101, L102, S140, and F141. Caffeine contacts are provided by Y158, Q161, and F162. N179 contributes to the Mg(2+) binding site. Residue T238 coordinates caffeine. Mg(2+) contacts are provided by D261, F263, and N264. Y369 provides a ligand contact to caffeine.

The protein belongs to the methyltransferase superfamily. Type-7 methyltransferase family. Mg(2+) serves as cofactor.

Its pathway is alkaloid biosynthesis. In terms of biological role, may be involved in the biosynthesis of caffeine. This Coffea canephora (Robusta coffee) protein is Probable caffeine synthase MTL1.